The chain runs to 624 residues: Kelch-like ECH-associated protein 1 (624 aa).

Cys38 is modified (S-(2-succinyl)cysteine). A BTB domain is found at 77–149; the sequence is CDVTLQVKYE…AYTASISVGE (73 aa). An N5-[4-(S-L-cysteinyl)-5-methyl-1H-imidazol-2-yl]-L-ornithine (Arg-Cys) (interchain with C-151 in KEAP1) cross-link involves residue Arg135. An S-(2,3-dicarboxypropyl)cysteine; alternate modification is found at Cys151. Cys151 carries the S-(2-succinyl)cysteine; alternate modification. The residue at position 151 (Cys151) is an S-nitrosocysteine; alternate. Residue Cys151 forms an N5-[4-(S-L-cysteinyl)-5-methyl-1H-imidazol-2-yl]-L-ornithine (Cys-Arg) (interchain with R-135 in KEAP1) linkage. One can recognise a BACK domain in the interval 184-286; that stretch reads AIGIANFAEQ…TPRFLQTQLQ (103 aa). Cys241 is modified (S-(2-succinyl)cysteine). S-(2,3-dicarboxypropyl)cysteine is present on residues Cys257 and Cys273. The residue at position 288 (Cys288) is an S-(2,3-dicarboxypropyl)cysteine; alternate. Cys288 is subject to S-(2-succinyl)cysteine; alternate. An S-(2-succinyl)cysteine modification is found at Cys319. Kelch repeat units lie at residues 327-372, 373-423, 424-470, 471-517, 519-564, and 565-611; these read LIYT…VVGG, LLYA…VIDG, HIYA…VLNR, LLYA…VLHN, IYAA…VHQG, and KIYV…VTME. Residue Cys434 is modified to S-cGMP-cysteine. At Cys613 the chain carries S-(2-succinyl)cysteine.

This sequence belongs to the KEAP1 family. As to quaternary structure, component of the BCR(KEAP1) E3 ubiquitin ligase complex, at least composed of 2 molecules of CUL3, 2 molecules of KEAP1, and RBX1. Interacts with NFE2L2/NRF2; the interaction is direct. Forms a ternary complex with NFE2L2/NRF2 and PGAM5. Interacts with (phosphorylated) SQSTM1/p62; the interaction is direct and inactivates the BCR(KEAP1) complex by sequestering it in inclusion bodies, promoting its degradation. Interacts with NFE2L1. Interacts with BPTF and PTMA. Interacts with MAP1LC3B. Interacts indirectly with ENC1. Interacts with SESN1 and SESN2. Interacts with HSP90AA1 and HSP90AB1. Interacts with PGCKA1; this interaction prevents the ubiquitination of KEAP1 by TRIM25, thus protecting KEAP1 from degradation. Non-enzymatic covalent modifications of reactive cysteines by electrophile metabolites inactivate the BCR(KEAP1) complex. Accumulation of fumarate promotes the formation of cysteine S-succination (S-(2-succinyl)cysteine), leading to inactivate the BCR(KEAP1) complex and promote NFE2L2/NRF2 nuclear accumulation and activation. Nitric oxide-dependent 8-Nitro-cGMP formation promotes cysteine guanylation (S-cGMP-cysteine), leading to NFE2L2/NRF2 nuclear accumulation and activation. Itaconate, an anti-inflammatory metabolite generated in response to lipopolysaccharide, alkylates cysteines, activating NFE2L2/NRF2. Methylglyoxal, a reactive metabolite that accumulates when the glycolytic enzyme PGK1 is inhibited, promotes formation of a methylimidazole cross-link between proximal Cys-151 and Arg-135 on another KEAP1 molecule, resulting in an inactive dimer that inactivates the BCR(KEAP1) complex. Post-translationally, degraded via a proteasomal-independent process during selective autophagy: interaction with phosphorylated SQSTM1/p62 sequesters KEAP1 in inclusion bodies, leading to its degradation. In terms of processing, auto-ubiquitinated by the BCR(KEAP1) complex. Quinone-induced oxidative stress, but not sulforaphane, increases its ubiquitination. Ubiquitination and subsequent degradation is most pronounced following prolonged exposure of cells to oxidative stress, particularly in glutathione-deficient cells that are highly susceptible to oxidative stress. Deubiquitinated by USP25; leading to stabilization. Ubiquitinated by TRIM25; leading to degradation upon ER stress.

It is found in the cytoplasm. Its subcellular location is the nucleus. The protein operates within protein modification; protein ubiquitination. Ubiquitin ligase activity of the BCR(KEAP1) complex is inhibited by oxidative stress and electrophile metabolites such as sulforaphane. Electrophile metabolites react with reactive cysteine residues in KEAP1 and trigger non-enzymatic covalent modifications of these cysteine residues, leading to inactivate the ubiquitin ligase activity of the BCR(KEAP1) complex. Selective autophagy also inactivates the BCR(KEAP1) complex via interaction between KEAP1 and SQSTM1/p62, which sequesters the complex in inclusion bodies and promotes its degradation. Its function is as follows. Substrate-specific adapter of a BCR (BTB-CUL3-RBX1) E3 ubiquitin ligase complex that regulates the response to oxidative stress by targeting NFE2L2/NRF2 for ubiquitination. KEAP1 acts as a key sensor of oxidative and electrophilic stress: in normal conditions, the BCR(KEAP1) complex mediates ubiquitination and degradation of NFE2L2/NRF2, a transcription factor regulating expression of many cytoprotective genes. In response to oxidative stress, different electrophile metabolites trigger non-enzymatic covalent modifications of highly reactive cysteine residues in KEAP1, leading to inactivate the ubiquitin ligase activity of the BCR(KEAP1) complex, promoting NFE2L2/NRF2 nuclear accumulation and expression of phase II detoxifying enzymes. In response to selective autophagy, KEAP1 is sequestered in inclusion bodies following its interaction with SQSTM1/p62, leading to inactivation of the BCR(KEAP1) complex and activation of NFE2L2/NRF2. The BCR(KEAP1) complex also mediates ubiquitination of SQSTM1/p62, increasing SQSTM1/p62 sequestering activity and degradation. The BCR(KEAP1) complex also targets BPTF and PGAM5 for ubiquitination and degradation by the proteasome. The sequence is that of Kelch-like ECH-associated protein 1 from Mus musculus (Mouse).